Reading from the N-terminus, the 350-residue chain is D-alanine--D-alanine ligase (350 aa).

Positions 135–335 constitute an ATP-grasp domain; the sequence is KLYAKNLGVK…LAQSLPKTPK (201 aa). 164 to 219 contacts ATP; it reads KPSFNFPFIVKPNNAGSSLGVSVVKEEKELAYALDGAFEYSKEVLIEPFIQRVKEY. Mg(2+) contacts are provided by Asp-291, Glu-303, and Asn-305.

Belongs to the D-alanine--D-alanine ligase family. The cofactor is Mg(2+). Requires Mn(2+) as cofactor.

The protein resides in the cytoplasm. It carries out the reaction 2 D-alanine + ATP = D-alanyl-D-alanine + ADP + phosphate + H(+). Its pathway is cell wall biogenesis; peptidoglycan biosynthesis. Functionally, cell wall formation. In Helicobacter acinonychis (strain Sheeba), this protein is D-alanine--D-alanine ligase.